We begin with the raw amino-acid sequence, 93 residues long: Co-chaperonin GroES (93 aa).

This sequence belongs to the GroES chaperonin family. In terms of assembly, heptamer of 7 subunits arranged in a ring. Interacts with the chaperonin GroEL.

The protein resides in the cytoplasm. Together with the chaperonin GroEL, plays an essential role in assisting protein folding. The GroEL-GroES system forms a nano-cage that allows encapsulation of the non-native substrate proteins and provides a physical environment optimized to promote and accelerate protein folding. GroES binds to the apical surface of the GroEL ring, thereby capping the opening of the GroEL channel. This Streptococcus gordonii protein is Co-chaperonin GroES.